The chain runs to 25 residues: Small ribosomal subunit protein eS32 (25 aa).

Positions 1–25 (MREKWKKKRSRRLRRKRRKMRARSK) are disordered.

The protein belongs to the eukaryotic ribosomal protein eS32 family. In terms of assembly, component of the large ribosomal subunit.

The sequence is that of Small ribosomal subunit protein eS32 (rpl41) from Agaricus bisporus (White button mushroom).